We begin with the raw amino-acid sequence, 139 residues long: Envelope protein A28 homolog (139 aa).

A helical; Signal-anchor for type II membrane protein transmembrane segment spans residues 1-21 (MNPSSVFLIVVATVAICLIVI). Residues 22 to 139 (QVYYIYENYD…KDCNFLKSVL (118 aa)) lie on the Virion surface side of the membrane.

The protein belongs to the poxviridae A28 protein family. In terms of processing, contains two intramolecular disulfide bonds. They are created by the viral disulfide bond formation pathway, a poxvirus-specific pathway that operates on the cytoplasmic side of the MV membranes.

It is found in the virion membrane. Its function is as follows. Envelope protein required for virus entry into host cell and for cell-cell fusion (syncytium formation). This chain is Envelope protein A28 homolog, found in Homo sapiens (Human).